A 333-amino-acid polypeptide reads, in one-letter code: DNA-directed RNA polymerase subunit alpha (333 aa).

The alpha N-terminal domain (alpha-NTD) stretch occupies residues 1 to 234 (MQSSVNEFLT…QQLAAFVDLK (234 aa)). Positions 248-333 (IDPILLRPVD…SLKKDDKATA (86 aa)) are alpha C-terminal domain (alpha-CTD).

Belongs to the RNA polymerase alpha chain family. Homodimer. The RNAP catalytic core consists of 2 alpha, 1 beta, 1 beta' and 1 omega subunit. When a sigma factor is associated with the core the holoenzyme is formed, which can initiate transcription.

It carries out the reaction RNA(n) + a ribonucleoside 5'-triphosphate = RNA(n+1) + diphosphate. Its function is as follows. DNA-dependent RNA polymerase catalyzes the transcription of DNA into RNA using the four ribonucleoside triphosphates as substrates. The protein is DNA-directed RNA polymerase subunit alpha of Pseudomonas aeruginosa (strain UCBPP-PA14).